A 232-amino-acid chain; its full sequence is 5'-methylthioadenosine/S-adenosylhomocysteine nucleosidase (232 aa).

The Proton acceptor role is filled by Glu-12. Residues Gly-78, Ile-152, and 173–174 (ME) each bind substrate. The active-site Proton donor is Asp-197.

This sequence belongs to the PNP/UDP phosphorylase family. MtnN subfamily. Homodimer.

It carries out the reaction S-adenosyl-L-homocysteine + H2O = S-(5-deoxy-D-ribos-5-yl)-L-homocysteine + adenine. The catalysed reaction is S-methyl-5'-thioadenosine + H2O = 5-(methylsulfanyl)-D-ribose + adenine. It catalyses the reaction 5'-deoxyadenosine + H2O = 5-deoxy-D-ribose + adenine. Its pathway is amino-acid biosynthesis; L-methionine biosynthesis via salvage pathway; S-methyl-5-thio-alpha-D-ribose 1-phosphate from S-methyl-5'-thioadenosine (hydrolase route): step 1/2. Its function is as follows. Catalyzes the irreversible cleavage of the glycosidic bond in both 5'-methylthioadenosine (MTA) and S-adenosylhomocysteine (SAH/AdoHcy) to adenine and the corresponding thioribose, 5'-methylthioribose and S-ribosylhomocysteine, respectively. Also cleaves 5'-deoxyadenosine, a toxic by-product of radical S-adenosylmethionine (SAM) enzymes, into 5-deoxyribose and adenine. Thus, is required for in vivo function of the radical SAM enzymes biotin synthase and lipoic acid synthase, that are inhibited by 5'-deoxyadenosine accumulation. The protein is 5'-methylthioadenosine/S-adenosylhomocysteine nucleosidase of Klebsiella pneumoniae (strain 342).